We begin with the raw amino-acid sequence, 863 residues long: Cilia- and flagella-associated protein 58 (863 aa).

Coiled-coil stretches lie at residues 107–600 (TVKE…NERD) and 631–815 (QSQY…KQVF). The interval 836–863 (GPSLLDQLPGGSGTGSGGMATGGGVGMS) is disordered. Over residues 845-863 (GGSGTGSGGMATGGGVGMS) the composition is skewed to gly residues.

This sequence belongs to the CFAP58 family.

The protein resides in the cell projection. It is found in the cilium. The protein localises to the flagellum. This chain is Cilia- and flagella-associated protein 58, found in Chlamydomonas reinhardtii (Chlamydomonas smithii).